The chain runs to 465 residues: 23S rRNA (uracil(1939)-C(5))-methyltransferase RlmD (465 aa).

Residues M1 to A22 are disordered. The 65-residue stretch at P16 to D80 folds into the TRAM domain. [4Fe-4S] cluster is bound by residues C93, C99, C102, and C181. Residues Q289, F318, N323, E339, N367, and D388 each contribute to the S-adenosyl-L-methionine site. C421 acts as the Nucleophile in catalysis.

This sequence belongs to the class I-like SAM-binding methyltransferase superfamily. RNA M5U methyltransferase family. RlmD subfamily.

It catalyses the reaction uridine(1939) in 23S rRNA + S-adenosyl-L-methionine = 5-methyluridine(1939) in 23S rRNA + S-adenosyl-L-homocysteine + H(+). Its function is as follows. Catalyzes the formation of 5-methyl-uridine at position 1939 (m5U1939) in 23S rRNA. The protein is 23S rRNA (uracil(1939)-C(5))-methyltransferase RlmD of Burkholderia cenocepacia (strain HI2424).